The sequence spans 216 residues: Glycerol-3-phosphate acyltransferase (216 aa).

A run of 5 helical transmembrane segments spans residues 5 to 25 (LIAL…FGLV), 70 to 90 (IAAA…AGAF), 118 to 138 (VVFW…AAIF), 140 to 160 (ISSL…LAWG), and 164 to 184 (VAIM…ANIS). The span at 192 to 201 (PRIGGKKSET) shows a compositional bias: basic and acidic residues. Residues 192 to 216 (PRIGGKKSETSADVSDGDDPDTPAT) form a disordered region. Residues 206 to 216 (SDGDDPDTPAT) show a composition bias toward acidic residues.

The protein belongs to the PlsY family. In terms of assembly, probably interacts with PlsX.

The protein resides in the cell inner membrane. The catalysed reaction is an acyl phosphate + sn-glycerol 3-phosphate = a 1-acyl-sn-glycero-3-phosphate + phosphate. Its pathway is lipid metabolism; phospholipid metabolism. Functionally, catalyzes the transfer of an acyl group from acyl-phosphate (acyl-PO(4)) to glycerol-3-phosphate (G3P) to form lysophosphatidic acid (LPA). This enzyme utilizes acyl-phosphate as fatty acyl donor, but not acyl-CoA or acyl-ACP. This is Glycerol-3-phosphate acyltransferase from Maricaulis maris (strain MCS10) (Caulobacter maris).